A 444-amino-acid polypeptide reads, in one-letter code: uncharacterized protein (444 aa).

In terms of domain architecture, Radical SAM core spans 164-381 (GAYGKSFLLE…EKALKKEGIR (218 aa)). The [4Fe-4S] cluster site is built by cysteine 178, cysteine 182, and cysteine 185.

[4Fe-4S] cluster serves as cofactor.

This is an uncharacterized protein from Methanocaldococcus jannaschii (strain ATCC 43067 / DSM 2661 / JAL-1 / JCM 10045 / NBRC 100440) (Methanococcus jannaschii).